The primary structure comprises 226 residues: Thymidylate kinase (226 aa).

ATP is bound at residue 12-19 (GIDGAGKS).

It belongs to the thymidylate kinase family.

The catalysed reaction is dTMP + ATP = dTDP + ADP. Its function is as follows. Phosphorylation of dTMP to form dTDP in both de novo and salvage pathways of dTTP synthesis. The sequence is that of Thymidylate kinase from Verminephrobacter eiseniae (strain EF01-2).